Here is a 59-residue protein sequence, read N- to C-terminus: Large ribosomal subunit protein bL32 (59 aa).

Over residues 1-19 the composition is skewed to basic residues; that stretch reads MAQPKKKTSKSRRNMRRSH. Residues 1 to 20 form a disordered region; the sequence is MAQPKKKTSKSRRNMRRSHD.

Belongs to the bacterial ribosomal protein bL32 family.

This Maridesulfovibrio salexigens (strain ATCC 14822 / DSM 2638 / NCIMB 8403 / VKM B-1763) (Desulfovibrio salexigens) protein is Large ribosomal subunit protein bL32.